A 944-amino-acid polypeptide reads, in one-letter code: Translation factor GUF1 homolog, mitochondrial (944 aa).

In terms of domain architecture, tr-type G spans 201–379 (KNVRNFCILA…IITDIPYPPI (179 aa)). GTP-binding positions include 210–217 (AHIDSGKS), 271–275 (DTPGH), and 325–328 (NKID).

It belongs to the TRAFAC class translation factor GTPase superfamily. Classic translation factor GTPase family. LepA subfamily.

The protein resides in the mitochondrion inner membrane. The enzyme catalyses GTP + H2O = GDP + phosphate + H(+). Promotes mitochondrial protein synthesis. May act as a fidelity factor of the translation reaction, by catalyzing a one-codon backward translocation of tRNAs on improperly translocated ribosomes. Binds to mitochondrial ribosomes in a GTP-dependent manner. This Plasmodium yoelii yoelii protein is Translation factor GUF1 homolog, mitochondrial.